The primary structure comprises 619 residues: Dihydroxy-acid dehydratase (619 aa).

Asp81 contributes to the Mg(2+) binding site. A [2Fe-2S] cluster-binding site is contributed by Cys122. The Mg(2+) site is built by Asp123 and Lys124. Lys124 is modified (N6-carboxylysine). Cys201 is a binding site for [2Fe-2S] cluster. Position 496 (Glu496) interacts with Mg(2+). Ser522 functions as the Proton acceptor in the catalytic mechanism.

Belongs to the IlvD/Edd family. In terms of assembly, homodimer. It depends on [2Fe-2S] cluster as a cofactor. Mg(2+) is required as a cofactor.

It catalyses the reaction (2R)-2,3-dihydroxy-3-methylbutanoate = 3-methyl-2-oxobutanoate + H2O. The catalysed reaction is (2R,3R)-2,3-dihydroxy-3-methylpentanoate = (S)-3-methyl-2-oxopentanoate + H2O. Its pathway is amino-acid biosynthesis; L-isoleucine biosynthesis; L-isoleucine from 2-oxobutanoate: step 3/4. It functions in the pathway amino-acid biosynthesis; L-valine biosynthesis; L-valine from pyruvate: step 3/4. In terms of biological role, functions in the biosynthesis of branched-chain amino acids. Catalyzes the dehydration of (2R,3R)-2,3-dihydroxy-3-methylpentanoate (2,3-dihydroxy-3-methylvalerate) into 2-oxo-3-methylpentanoate (2-oxo-3-methylvalerate) and of (2R)-2,3-dihydroxy-3-methylbutanoate (2,3-dihydroxyisovalerate) into 2-oxo-3-methylbutanoate (2-oxoisovalerate), the penultimate precursor to L-isoleucine and L-valine, respectively. The chain is Dihydroxy-acid dehydratase from Paracidovorax citrulli (strain AAC00-1) (Acidovorax citrulli).